The sequence spans 915 residues: Isoleucine--tRNA ligase (915 aa).

The short motif at 57–67 (PYANGNLHMGH) is the 'HIGH' region element. Glu-554 provides a ligand contact to L-isoleucyl-5'-AMP. The short motif at 595–599 (KMSKS) is the 'KMSKS' region element. Lys-598 is a binding site for ATP. Residues Cys-885, Cys-888, Cys-905, and Cys-908 each coordinate Zn(2+).

The protein belongs to the class-I aminoacyl-tRNA synthetase family. IleS type 1 subfamily. In terms of assembly, monomer. Requires Zn(2+) as cofactor.

The protein resides in the cytoplasm. It carries out the reaction tRNA(Ile) + L-isoleucine + ATP = L-isoleucyl-tRNA(Ile) + AMP + diphosphate. In terms of biological role, catalyzes the attachment of isoleucine to tRNA(Ile). As IleRS can inadvertently accommodate and process structurally similar amino acids such as valine, to avoid such errors it has two additional distinct tRNA(Ile)-dependent editing activities. One activity is designated as 'pretransfer' editing and involves the hydrolysis of activated Val-AMP. The other activity is designated 'posttransfer' editing and involves deacylation of mischarged Val-tRNA(Ile). In Staphylococcus carnosus (strain TM300), this protein is Isoleucine--tRNA ligase.